The chain runs to 359 residues: Probable mannitol dehydrogenase (359 aa).

Residues Cys-48, His-70, Cys-101, Cys-104, Cys-107, Cys-115, and Cys-164 each coordinate Zn(2+).

Belongs to the zinc-containing alcohol dehydrogenase family. Requires Zn(2+) as cofactor.

It carries out the reaction D-mannitol + NAD(+) = D-mannose + NADH + H(+). Oxidizes mannitol to mannose. Provides the initial step by which translocated mannitol is committed to central metabolism and, by regulating mannitol pool size, is important in regulating salt tolerance at the cellular level. The polypeptide is Probable mannitol dehydrogenase (CAD) (Fragaria ananassa (Strawberry)).